The sequence spans 126 residues: Aspartate 1-decarboxylase (126 aa).

Ser25 functions as the Schiff-base intermediate with substrate; via pyruvic acid in the catalytic mechanism. A Pyruvic acid (Ser) modification is found at Ser25. Residue Thr57 coordinates substrate. The active-site Proton donor is the Tyr58. A substrate-binding site is contributed by Gly73–Ala75.

Belongs to the PanD family. As to quaternary structure, heterooctamer of four alpha and four beta subunits. The cofactor is pyruvate. Is synthesized initially as an inactive proenzyme, which is activated by self-cleavage at a specific serine bond to produce a beta-subunit with a hydroxyl group at its C-terminus and an alpha-subunit with a pyruvoyl group at its N-terminus.

The protein resides in the cytoplasm. It carries out the reaction L-aspartate + H(+) = beta-alanine + CO2. It participates in cofactor biosynthesis; (R)-pantothenate biosynthesis; beta-alanine from L-aspartate: step 1/1. Functionally, catalyzes the pyruvoyl-dependent decarboxylation of aspartate to produce beta-alanine. The sequence is that of Aspartate 1-decarboxylase from Acinetobacter baylyi (strain ATCC 33305 / BD413 / ADP1).